Reading from the N-terminus, the 469-residue chain is 3-isopropylmalate dehydratase large subunit (469 aa).

[4Fe-4S] cluster-binding residues include Cys-350, Cys-410, and Cys-413.

This sequence belongs to the aconitase/IPM isomerase family. LeuC type 1 subfamily. In terms of assembly, heterodimer of LeuC and LeuD. Requires [4Fe-4S] cluster as cofactor.

The catalysed reaction is (2R,3S)-3-isopropylmalate = (2S)-2-isopropylmalate. The protein operates within amino-acid biosynthesis; L-leucine biosynthesis; L-leucine from 3-methyl-2-oxobutanoate: step 2/4. In terms of biological role, catalyzes the isomerization between 2-isopropylmalate and 3-isopropylmalate, via the formation of 2-isopropylmaleate. This chain is 3-isopropylmalate dehydratase large subunit, found in Brucella anthropi (strain ATCC 49188 / DSM 6882 / CCUG 24695 / JCM 21032 / LMG 3331 / NBRC 15819 / NCTC 12168 / Alc 37) (Ochrobactrum anthropi).